Here is a 282-residue protein sequence, read N- to C-terminus: Pantothenate synthetase (282 aa).

28–35 (MGALHSGH) contributes to the ATP binding site. Residue H35 is the Proton donor of the active site. Position 59 (Q59) interacts with (R)-pantoate. Q59 provides a ligand contact to beta-alanine. 146 to 149 (GEKD) is an ATP binding site. Residue Q152 participates in (R)-pantoate binding. ATP-binding positions include V175 and 183-186 (LSSR).

This sequence belongs to the pantothenate synthetase family. Homodimer.

Its subcellular location is the cytoplasm. It catalyses the reaction (R)-pantoate + beta-alanine + ATP = (R)-pantothenate + AMP + diphosphate + H(+). Its pathway is cofactor biosynthesis; (R)-pantothenate biosynthesis; (R)-pantothenate from (R)-pantoate and beta-alanine: step 1/1. In terms of biological role, catalyzes the condensation of pantoate with beta-alanine in an ATP-dependent reaction via a pantoyl-adenylate intermediate. The sequence is that of Pantothenate synthetase from Salinispora arenicola (strain CNS-205).